We begin with the raw amino-acid sequence, 370 residues long: MRTSILSMLALGAAAVSAAPAAAAAPAELVERGSSCTFTSASAAKAGKKSCSSIVLDNIKVPAGETLDLSNLKSGTKVTFKGETTFGYKEWKGPLIRFSGKNIEVNGASGHVINGGGASWWDGKGTNGGKTKPKFFYAHSLDDSTITGLNVKNTPVQGFSVQADNLVLDHITIDNTDGDKTNGGHNTDAFDVGESTYITISNANIKNQDDCLAINSGENIIFTGGTCSGGHGLSIGSVGGRDDNTVKNVTISDSTVSNSDNGIRIKTIYKAKGEVADVTFSNIELSNIAKYGIVIEQDYENGSPTGKPTTGVPITGLTVEKVTGSVKSSGTDVYILCGSGSCSDWTWSGNKVSGGKTSSKCKNVPSGASC.

The signal sequence occupies residues 1-18; that stretch reads MRTSILSMLALGAAAVSA. Residues Cys36 and Cys51 are joined by a disulfide bond. PbH1 repeat units follow at residues 163–194, 195–216, 217–237, 246–267, and 275–297; these read ADNL…DVGE, STYI…AINS, GENI…SIGS, VKNV…RIKT, and VADV…VIEQ. The active-site Proton donor is the Asp209. Residues Cys211 and Cys227 are joined by a disulfide bond. The active site involves His231. N-linked (GlcNAc...) asparagine glycosylation occurs at Asn248. 2 disulfide bridges follow: Cys337–Cys342 and Cys361–Cys370.

It belongs to the glycosyl hydrolase 28 family.

Its subcellular location is the secreted. The enzyme catalyses (1,4-alpha-D-galacturonosyl)n+m + H2O = (1,4-alpha-D-galacturonosyl)n + (1,4-alpha-D-galacturonosyl)m.. In Penicillium olsonii, this protein is Polygalacturonase 1 (PG1).